Here is a 219-residue protein sequence, read N- to C-terminus: Hemolysin-3 (219 aa).

7 helical membrane passes run 19 to 39 (AITH…LIIH), 49 to 69 (VVAF…STLL), 83 to 103 (ILDH…FLLI), 112 to 132 (TLLA…IFFV), 138 to 158 (ASTL…KPLY), 165 to 185 (GFSL…FFLW), and 194 to 214 (IWHL…LFYV).

This sequence belongs to the UPF0073 (Hly-III) family.

It is found in the cell membrane. Might be virulent against a mammalian host; when expressed in E.coli, the soluble extract has hemolytic activity on human erythrocytes. The activity is not inhibited by cholesterol or activated by 2-mercaptoethanol. Might be pore-forming protein. Its in vivo role in virulence is untested, nor has it been shown to be secreted by B.cereus. This chain is Hemolysin-3, found in Bacillus cereus.